A 455-amino-acid chain; its full sequence is Zinc finger SWIM domain-containing protein 1 (455 aa).

The interval 264-288 is disordered; sequence ASLSLAETPQDSHTPSEASAENPNT. The SWIM-type zinc finger occupies 333–375; that stretch reads MSIQILEDTHTVQPQPPASCSCYFNQAFHLPCRHILAMLSARQ.

This Mus musculus (Mouse) protein is Zinc finger SWIM domain-containing protein 1 (Zswim1).